A 558-amino-acid chain; its full sequence is Dimethylaniline monooxygenase [N-oxide-forming] 4 (558 aa).

Residues 9–13 (GAGVS), glutamate 32, and 40–41 (LW) contribute to the FAD site. Residues 60–61 (TN) and 195–198 (TGGD) each bind NADP(+). A helical transmembrane segment spans residues 517-537 (AWGAPVLLASLLLICKSSLFL).

Belongs to the FMO family. Requires FAD as cofactor. As to expression, liver.

The protein resides in the microsome membrane. Its subcellular location is the endoplasmic reticulum membrane. The catalysed reaction is N,N-dimethylaniline + NADPH + O2 + H(+) = N,N-dimethylaniline N-oxide + NADP(+) + H2O. Functionally, this protein is involved in the oxidative metabolism of a variety of xenobiotics such as drugs and pesticides. This chain is Dimethylaniline monooxygenase [N-oxide-forming] 4 (FMO4), found in Homo sapiens (Human).